The following is a 354-amino-acid chain: Uroporphyrinogen decarboxylase (354 aa).

Substrate is bound by residues 27–31 (RQAGR), aspartate 77, tyrosine 154, threonine 209, and histidine 327.

The protein belongs to the uroporphyrinogen decarboxylase family. Homodimer.

Its subcellular location is the cytoplasm. It catalyses the reaction uroporphyrinogen III + 4 H(+) = coproporphyrinogen III + 4 CO2. The protein operates within porphyrin-containing compound metabolism; protoporphyrin-IX biosynthesis; coproporphyrinogen-III from 5-aminolevulinate: step 4/4. In terms of biological role, catalyzes the decarboxylation of four acetate groups of uroporphyrinogen-III to yield coproporphyrinogen-III. The polypeptide is Uroporphyrinogen decarboxylase (Escherichia coli O6:K15:H31 (strain 536 / UPEC)).